Here is a 62-residue protein sequence, read N- to C-terminus: MSVLFQLLIAAFVALSFAMIIGVPVVFSTGDASDDANKLIWGGAAAWVVLLFVAALASIVVI.

2 helical membrane-spanning segments follow: residues 8–28 and 41–61; these read LIAAFVALSFAMIIGVPVVFS and WGGAAAWVVLLFVAALASIVV.

Belongs to the PsbZ family. As to quaternary structure, PSII is composed of 1 copy each of membrane proteins PsbA, PsbB, PsbC, PsbD, PsbE, PsbF, PsbH, PsbI, PsbJ, PsbK, PsbL, PsbM, PsbT, PsbX, PsbY, PsbZ, Psb30/Ycf12, peripheral proteins PsbO, CyanoQ (PsbQ), PsbU, PsbV and a large number of cofactors. It forms dimeric complexes.

The protein localises to the cellular thylakoid membrane. Functionally, may control the interaction of photosystem II (PSII) cores with the light-harvesting antenna, regulates electron flow through the 2 photosystem reaction centers. PSII is a light-driven water plastoquinone oxidoreductase, using light energy to abstract electrons from H(2)O, generating a proton gradient subsequently used for ATP formation. The protein is Photosystem II reaction center protein Z of Acaryochloris marina (strain MBIC 11017).